The following is a 331-amino-acid chain: Ketol-acid reductoisomerase (NADP(+)) (331 aa).

A KARI N-terminal Rossmann domain is found at 2–181 (TKVYYEDAVK…GATRAGVIET (180 aa)). Residues 25–28 (YGSQ), Arg-48, Ser-52, and 82–85 (DETQ) each bind NADP(+). Residue His-107 is part of the active site. Gly-133 contacts NADP(+). The 146-residue stretch at 182 to 327 (TFKEETETDL…AELREMMPFV (146 aa)) folds into the KARI C-terminal knotted domain. Asp-190, Glu-194, Glu-226, and Glu-230 together coordinate Mg(2+). Ser-251 provides a ligand contact to substrate.

It belongs to the ketol-acid reductoisomerase family. Mg(2+) serves as cofactor.

The catalysed reaction is (2R)-2,3-dihydroxy-3-methylbutanoate + NADP(+) = (2S)-2-acetolactate + NADPH + H(+). The enzyme catalyses (2R,3R)-2,3-dihydroxy-3-methylpentanoate + NADP(+) = (S)-2-ethyl-2-hydroxy-3-oxobutanoate + NADPH + H(+). It functions in the pathway amino-acid biosynthesis; L-isoleucine biosynthesis; L-isoleucine from 2-oxobutanoate: step 2/4. It participates in amino-acid biosynthesis; L-valine biosynthesis; L-valine from pyruvate: step 2/4. In terms of biological role, involved in the biosynthesis of branched-chain amino acids (BCAA). Catalyzes an alkyl-migration followed by a ketol-acid reduction of (S)-2-acetolactate (S2AL) to yield (R)-2,3-dihydroxy-isovalerate. In the isomerase reaction, S2AL is rearranged via a Mg-dependent methyl migration to produce 3-hydroxy-3-methyl-2-ketobutyrate (HMKB). In the reductase reaction, this 2-ketoacid undergoes a metal-dependent reduction by NADPH to yield (R)-2,3-dihydroxy-isovalerate. This is Ketol-acid reductoisomerase (NADP(+)) from Listeria monocytogenes serovar 1/2a (strain ATCC BAA-679 / EGD-e).